Reading from the N-terminus, the 565-residue chain is MSGRSKRESRGSTRGKRESESRGSSGRVKRERDREREPEAASSRGSPVRVKREFEPASAREAPASVVPFVRVKREREVDEDSEPEREVRAKNGRVDSEDRRSRHCPYLDTINRSVLDFDFEKLCSISLSHINAYACLVCGKYFQGRGLKSHAYIHSVQFSHHVFLNLHTLKFYCLPDNYEIIDSSLEDITYVLKPTFTKQQIANLDKQAKLSRAYDGTTYLPGIVGLNNIKANDYANAVLQALSNVPPLRNYFLEEDNYKNIKRPPGDIMFLLVQRFGELMRKLWNPRNFKAHVSPHEMLQAVVLCSKKTFQITKQGDGVDFLSWFLNALHSALGGTKKKKKTIVTDVFQGSMRIFTKKLPHPDLPAEEKEQLLHNDEYQETMVESTFMYLTLDLPTAPLYKDEKEQLIIPQVPLFNILAKFNGITEKEYKTYKENFLKRFQLTKLPPYLIFCIKRFTKNNFFVEKNPTIVNFPITNVDLREYLSEEVQAVHKNTTYDLIANIVHDGKPSEGSYRIHVLHHGTGKWYELQDLQVTDILPQMITLSEAYIQIWKRRDNDETNQQGA.

2 stretches are compositionally biased toward basic and acidic residues: residues 1-21 (MSGR…ESES) and 28-39 (VKRERDREREPE). 2 disordered regions span residues 1 to 61 (MSGR…SARE) and 75 to 95 (EREV…NGRV). Phosphoserine is present on S46. K51 is covalently cross-linked (Glycyl lysine isopeptide (Lys-Gly) (interchain with G-Cter in SUMO2)). The residue at position 82 (S82) is a Phosphoserine. Residues 85–95 (EREVRAKNGRV) show a composition bias toward basic and acidic residues. Residues 103 to 200 (RHCPYLDTIN…YVLKPTFTKQ (98 aa)) form a UBP-type; degenerate zinc finger. Positions 136, 139, 155, and 161 each coordinate Zn(2+). One can recognise a USP domain in the interval 225 to 555 (VGLNNIKAND…EAYIQIWKRR (331 aa)).

This sequence belongs to the peptidase C19 family. The U4/U6-U5 tri-snRNP complex is a building block of the precatalytic spliceosome (spliceosome B complex). Component of the U4/U6-U5 tri-snRNP complex composed of the U4, U6 and U5 snRNAs and at least PRPF3, PRPF4, PRPF6, PRPF8, PRPF31, SNRNP200, TXNL4A, SNRNP40, SNRPB, SNRPD1, SNRPD2, SNRPD3, SNRPE, SNRPF, SNRPG, DDX23, CD2BP2, PPIH, SNU13, EFTUD2, SART1 and USP39, plus LSM2, LSM3, LSM4, LSM5, LSM6, LSM7 and LSM8.

It is found in the nucleus. The catalysed reaction is Thiol-dependent hydrolysis of ester, thioester, amide, peptide and isopeptide bonds formed by the C-terminal Gly of ubiquitin (a 76-residue protein attached to proteins as an intracellular targeting signal).. Functionally, deubiquitinating enzyme that plays a role in many cellular processes including cellular antiviral response, epithelial morphogenesis, DNA repair or B-cell development. Plays a role in pre-mRNA splicing as a component of the U4/U6-U5 tri-snRNP, one of the building blocks of the precatalytic spliceosome. Specifically regulates immunoglobulin gene rearrangement in a spliceosome-dependent manner, which involves modulating chromatin interactions at the Igh locus and therefore plays an essential role in B-cell development. Regulates AURKB mRNA levels, and thereby plays a role in cytokinesis and in the spindle checkpoint. Regulates apoptosis and G2/M cell cycle checkpoint in response to DNA damage by deubiquitinating and stabilizing CHK2. Also plays an important role in DNA repair by controlling the recruitment of XRCC4/LIG4 to DNA double-strand breaks for non-homologous end-joining repair. Participates in antiviral activity by affecting the type I IFN signaling by stabilizing STAT1 and decreasing its 'Lys-6'-linked ubiquitination. Contributes to non-canonical Wnt signaling during epidermal differentiation. Acts as a negative regulator NF-kappa-B activation through deubiquitination of 'Lys-48'-linked ubiquitination of NFKBIA. This is Ubiquitin carboxyl-terminal hydrolase 39 from Homo sapiens (Human).